Here is a 529-residue protein sequence, read N- to C-terminus: Interleukin-21 receptor (529 aa).

The N-terminal stretch at 1–19 is a signal peptide; sequence MPRGPVAALLLLILHGAWS. Cystine bridges form between Cys-20–Cys-109, Cys-25–Cys-35, and Cys-65–Cys-81. The Extracellular portion of the chain corresponds to 20 to 237; it reads CLDLTCYTDY…GEPEAGWDPH (218 aa). 2 consecutive Fibronectin type-III domains span residues 21-118 and 119-228; these read LDLT…AESI and KPAP…TQAG. N-linked (GlcNAc...) asparagine glycans are attached at residues Asn-73, Asn-97, Asn-104, Asn-125, and Asn-182. C-linked (Man) tryptophan glycosylation is present at Trp-214. The WSXWS motif motif lies at 214-218; that stretch reads WSEWS. Residues 238-258 form a helical membrane-spanning segment; the sequence is MLLLLAVLIIVLVFMGLKIHL. The Cytoplasmic portion of the chain corresponds to 259-529; the sequence is PWRLWKKIWA…PPVDSGAQSS (271 aa). A Box 1 motif motif is present at residues 266–274; that stretch reads IWAPVPTPE. The tract at residues 458-529 is disordered; that stretch reads TADPTWRTGS…PPVDSGAQSS (72 aa).

Belongs to the type I cytokine receptor family. Type 4 subfamily. As to quaternary structure, heterodimer with the common gamma subunit. Associates with JAK1. C-mannosylated at Trp-214 in the WSXWS motif, the sugar chain makes extensive hydrogen bonds with Asn-73 sugar, and bridges the two fibronectin domains transforming the V-shaped receptor into an A-frame. As to expression, selectively expressed in lymphoid tissues. Most highly expressed in thymus and spleen.

It is found in the membrane. Its function is as follows. This is a receptor for interleukin-21. The chain is Interleukin-21 receptor (Il21r) from Mus musculus (Mouse).